Reading from the N-terminus, the 447-residue chain is Asparagine--tRNA ligase (447 aa).

It belongs to the class-II aminoacyl-tRNA synthetase family. As to quaternary structure, homodimer.

The protein resides in the cytoplasm. The enzyme catalyses tRNA(Asn) + L-asparagine + ATP = L-asparaginyl-tRNA(Asn) + AMP + diphosphate + H(+). The polypeptide is Asparagine--tRNA ligase (Herpetosiphon aurantiacus (strain ATCC 23779 / DSM 785 / 114-95)).